The following is a 159-amino-acid chain: Dihydrofolate reductase (159 aa).

The DHFR domain occupies 2–157; that stretch reads TLSILVAHDL…IPHTFLHLIR (156 aa). Residue 6–8 participates in substrate binding; that stretch reads LVA. Residues 7 to 8 and 15 to 20 each bind NADP(+); these read VA and IGFENQ. Aspartate 28 provides a ligand contact to substrate. 44–47 lines the NADP(+) pocket; that stretch reads GRKT. Substrate is bound at residue arginine 58. NADP(+) is bound by residues 63-66 and 93-98; these read LTSD and FGGQIL. Residue threonine 112 participates in substrate binding.

This sequence belongs to the dihydrofolate reductase family.

The enzyme catalyses (6S)-5,6,7,8-tetrahydrofolate + NADP(+) = 7,8-dihydrofolate + NADPH + H(+). It participates in cofactor biosynthesis; tetrahydrofolate biosynthesis; 5,6,7,8-tetrahydrofolate from 7,8-dihydrofolate: step 1/1. In terms of biological role, key enzyme in folate metabolism. Catalyzes an essential reaction for de novo glycine and purine synthesis, and for DNA precursor synthesis. The sequence is that of Dihydrofolate reductase (folA) from Staphylococcus aureus (strain MW2).